The primary structure comprises 216 residues: Twisted gastrulation protein homolog 1-A (216 aa).

Positions 1 to 25 (MKPSFLHIPAAALLLCSLWILPIYC) are cleaved as a signal peptide. N-linked (GlcNAc...) asparagine glycans are attached at residues N52, N81, and N145.

It belongs to the twisted gastrulation protein family. As to quaternary structure, binds directly to bmp2, bmp4 and bmp7 and can form a ternary complex with bmps and chordin, thus preventing the binding of bmps to their cell surface receptors. Posterior defects are induced by overexpression. This may arise through alteration of bmp4 or chrd function in the developing tailbud region.

It is found in the secreted. Its function is as follows. Involved in dorsal-ventral patterning, permitting peak BMP signaling by antagonizing the residual anti-BMP activity of the cleavage products of chrd. Functions to promote the formation of ventral mesoderm by increasing the activity of bmp7 and other BMPS. Seems to antagonize BMP signaling by forming ternary complexes with chrd and BMPs, thereby preventing BMPs from binding to their receptors. In addition to the anti-BMP function, also has pro-BMP activity, partly mediated by cleavage and degradation of chrd, which releases BMPs from ternary complexes. May be an important modulator of BMP-regulated cartilage development and chondrocyte differentiation. This is Twisted gastrulation protein homolog 1-A (twsg1-a) from Xenopus laevis (African clawed frog).